A 959-amino-acid chain; its full sequence is Mitogen-activated protein kinase kinase kinase 13 (959 aa).

The interval 1 to 47 is disordered; the sequence is MANPQEHLSCSSLPHLPLTENKTSGGRNELAAMGNHPSPKLPEDPQE. Residues 7–18 show a composition bias toward low complexity; the sequence is HLSCSSLPHLPL. A Protein kinase domain is found at 167 to 408; sequence ISELQWLGSG…FRQTLMHLDI (242 aa). Residues 173-181 and lysine 194 each bind ATP; that span reads LGSGAQGAV. The Proton acceptor role is filled by aspartate 278. 2 leucine-zipper regions span residues 432 to 453 and 485 to 506; these read VKKHFEKIKSEGTCIHRLDEEL and LSAIMLQLEMREKELLKREQAV. Disordered regions lie at residues 533–599, 739–828, 842–902, and 927–959; these read KRKG…GSHS, GSLD…RQRP, SSEN…LSDK, and NPVQFGDSDCDSSEGECSDATVRTSKNYSSATW. A compositionally biased stretch (polar residues) spans 566–577; it reads SPLSGSPKMSTA. Over residues 581-593 the composition is skewed to basic residues; the sequence is SRYRSKPRHRRGN. 2 stretches are compositionally biased toward polar residues: residues 754–774 and 780–790; these read DLSSSPAHNPLSGNAQGSERT and SGCQSGISHQF. The span at 808-820 shows a compositional bias: acidic residues; it reads DSSEEEGEVDSEV. Basic and acidic residues predominate over residues 866 to 876; it reads SANRRQDRLAE. Positions 934–943 are enriched in acidic residues; the sequence is SDCDSSEGEC. The segment covering 947–959 has biased composition (polar residues); the sequence is TVRTSKNYSSATW.

It belongs to the protein kinase superfamily. STE Ser/Thr protein kinase family. MAP kinase kinase kinase subfamily. In terms of assembly, homodimer; forms dimers through the leucine-zipper motif. Interacts with the C-terminus of MAPK8IP1 through the kinase catalytic domain. Binds PRDX3. Associates with the IKK complex through the kinase domain. It depends on Mg(2+) as a cofactor. Autophosphorylated on serine and threonine residues.

The protein resides in the cytoplasm. It localises to the membrane. It carries out the reaction L-seryl-[protein] + ATP = O-phospho-L-seryl-[protein] + ADP + H(+). It catalyses the reaction L-threonyl-[protein] + ATP = O-phospho-L-threonyl-[protein] + ADP + H(+). Its activity is regulated as follows. Activated by autophosphorylation and homodimerization. Functionally, activates the JUN N-terminal pathway through activation of the MAP kinase kinase MAP2K7. Acts synergistically with PRDX3 to regulate the activation of NF-kappa-B in the cytosol. This activation is kinase-dependent and involves activating the IKK complex, the IKBKB-containing complex that phosphorylates inhibitors of NF-kappa-B. This is Mitogen-activated protein kinase kinase kinase 13 (Map3k13) from Mus musculus (Mouse).